We begin with the raw amino-acid sequence, 213 residues long: MKPYQRQFIKFALSKQVLKFGEFTLKSGRKSPYFFNAGLFNTGRDLALLGRFYAEALVDSGIEFDLLFGPAYKGIPIATTTAVALAEHHDLDLPYCFNRKEAKDHGEGGNLVGSALQGRVMLVDDVITAGTAIRESMEIIQANGATLAGVLISLDRQERGRGEISAIQEVERDYNCKVISIITLKDLIAYLEEKPEMAEHLAAVKAYREEFGV.

Lys-26 provides a ligand contact to 5-phospho-alpha-D-ribose 1-diphosphate. Position 34–35 (34–35) interacts with orotate; sequence FF. 5-phospho-alpha-D-ribose 1-diphosphate is bound by residues 72 to 73, Arg-99, Lys-100, Lys-103, His-105, and 124 to 132; these read YK and DDVITAGTA. The orotate site is built by Thr-128 and Arg-156.

This sequence belongs to the purine/pyrimidine phosphoribosyltransferase family. PyrE subfamily. As to quaternary structure, homodimer. Mg(2+) serves as cofactor.

The catalysed reaction is orotidine 5'-phosphate + diphosphate = orotate + 5-phospho-alpha-D-ribose 1-diphosphate. Its pathway is pyrimidine metabolism; UMP biosynthesis via de novo pathway; UMP from orotate: step 1/2. Catalyzes the transfer of a ribosyl phosphate group from 5-phosphoribose 1-diphosphate to orotate, leading to the formation of orotidine monophosphate (OMP). The polypeptide is Orotate phosphoribosyltransferase (Shigella flexneri serotype 5b (strain 8401)).